A 470-amino-acid polypeptide reads, in one-letter code: MTVRTRFAPSPTGFLHVGGVRTALFSWLYAKHHNGQFILRIEDTDRERSTQESVQAILDGMAWLGLNFDEGPYYQTERYARYQQVAQQLLEEGKAYRCQCSKERLEALREAQLAAKEKPRYDGHCRNQSLPDSGIPYVIRFRNPDAGIVSFHDEVYGDIHVDNSELDDLILVRSDGHPTYNFAVVIDDWDMKITHVIRGDDHINNTPRQINLFKALDAPVPVFAHLPMILGEDGKRLSKRHGAVSVLQFKELGVLPHALLNYLVRLGWSHGDQEIFSVQEMITSFDLKNVSRGVSSFNYDKLYWLNQHYQKSDSPESVANALQWHFEQAGIDLNQGPDLKDLVAVQAERCKSLAEMCQISQYFYTDIIEYNEDAVKKHLRPVVLEPLMVLHERLKALDEWKNDKIQECINDVSLQFDLNLGKIAQPLRVAVTGSGTSPSIDMTLALLGKNKSIKRLEDALEKIRARASVV.

The 'HIGH' region motif lies at 9 to 19; the sequence is PSPTGFLHVGG. The short motif at 236 to 240 is the 'KMSKS' region element; that stretch reads RLSKR. Residue K239 participates in ATP binding.

It belongs to the class-I aminoacyl-tRNA synthetase family. Glutamate--tRNA ligase type 1 subfamily. Monomer.

The protein resides in the cytoplasm. The enzyme catalyses tRNA(Glu) + L-glutamate + ATP = L-glutamyl-tRNA(Glu) + AMP + diphosphate. Catalyzes the attachment of glutamate to tRNA(Glu) in a two-step reaction: glutamate is first activated by ATP to form Glu-AMP and then transferred to the acceptor end of tRNA(Glu). The polypeptide is Glutamate--tRNA ligase (Legionella pneumophila subsp. pneumophila (strain Philadelphia 1 / ATCC 33152 / DSM 7513)).